Here is a 469-residue protein sequence, read N- to C-terminus: MFAEDLDRILSGKYPGKSHALRVVELLREKVPNAKGYLYLEGRMSKLLEDSDEFEPFRQRRHFYYLTGCDLSNCYLLYDIDSSKSTLFIPPIDPEEVVWSGLPLSPQQGLEKYDVDEVKFSTELDNILSHLSGSQESTVYTIADQVCPHIKFGLDNVDSSILKGVIDRCRVVKDKYEVAMIRKANNISSLGHEAITKQASKASNEMQLEATFLGHCVAHGAKKMAYPPIVAAGRSGAILHYEANDQPLGGKQNLLVDAGAEWNNYASDITRTFPLSGTFTKESRQIYDIVYKMQMECIAIIKAGVRWEDVHMLAHEIAVEGLLQLGIFQGAKADILKAQTSLAFFPHGLGHYLGLDTHDVGGNPNFDDENKYLRYLRTRGTLPAGSVVTVEPGIYFCEHIIRPYLQDERHKDLINSDVLDKYWDVGGIRLTQGSIEDNVLVTPTGVDNLTTTIKHPDQLEGMIRGLEGV.

Mn(2+) is bound by residues aspartate 257, aspartate 268, glutamate 391, and glutamate 436.

Belongs to the peptidase M24B family. The cofactor is Mn(2+).

The catalysed reaction is Release of any N-terminal amino acid, including proline, that is linked to proline, even from a dipeptide or tripeptide.. Functionally, catalyzes the removal of a penultimate prolyl residue from the N-termini of peptides. The chain is Probable Xaa-Pro aminopeptidase PEPP (PEPP) from Fusarium vanettenii (strain ATCC MYA-4622 / CBS 123669 / FGSC 9596 / NRRL 45880 / 77-13-4) (Fusarium solani subsp. pisi).